Consider the following 222-residue polypeptide: GMP/IMP nucleotidase YrfG (222 aa).

The active-site Nucleophile is the D9. The Mg(2+) site is built by D9 and D11. Residues 9–11 (DVD) and K149 contribute to the substrate site. D174 contributes to the Mg(2+) binding site.

The protein belongs to the HAD-like hydrolase superfamily. Mg(2+) serves as cofactor. It depends on Mn(2+) as a cofactor. Co(2+) is required as a cofactor. Requires Zn(2+) as cofactor.

The enzyme catalyses a ribonucleoside 5'-phosphate + H2O = a ribonucleoside + phosphate. Its function is as follows. Catalyzes the dephosphorylation of different purine nucleotides (GMP and IMP). Also hydrolyzes flavin mononucleotide (FMN). The polypeptide is GMP/IMP nucleotidase YrfG (yrfG) (Escherichia coli (strain K12)).